The primary structure comprises 330 residues: Diacylglycerol acyltransferase/mycolyltransferase Ag85B (330 aa).

The N-terminal stretch at 1–40 is a signal peptide; sequence MTDLSEKVRAWGRRLVVGAAAAATLPGLIGIAGGAATANA. 82-83 lines the substrate pocket; the sequence is LR. The fibronectin-binding stretch occupies residues 98–108; sequence FEWYYQSGLSV. A disulfide bridge connects residues C127 and C132. Positions 166 and 194 each coordinate substrate. Catalysis depends on S166, which acts as the Nucleophile. Residue E270 is part of the active site. Substrate contacts are provided by residues 272–275, K279, and 302–304; these read FVRS and HSW. The active site involves H302.

This sequence belongs to the mycobacterial A85 antigen family.

The protein localises to the secreted. The catalysed reaction is 2 alpha,alpha'-trehalose 6-mycolate = alpha,alpha'-trehalose 6,6'-bismycolate + alpha,alpha-trehalose. It carries out the reaction an acyl-CoA + a 1,2-diacyl-sn-glycerol = a triacyl-sn-glycerol + CoA. In terms of biological role, the antigen 85 proteins (FbpA, FbpB, FbpC) are responsible for the high affinity of mycobacteria for fibronectin, a large adhesive glycoprotein, which facilitates the attachment of M.tuberculosis to murine alveolar macrophages (AMs). They also help to maintain the integrity of the cell wall by catalyzing the transfer of mycolic acids to cell wall arabinogalactan and through the synthesis of alpha,alpha-trehalose dimycolate (TDM, cord factor). They catalyze the transfer of a mycoloyl residue from one molecule of alpha,alpha-trehalose monomycolate (TMM) to another TMM, leading to the formation of TDM. This chain is Diacylglycerol acyltransferase/mycolyltransferase Ag85B (fbpB), found in Mycobacterium intracellulare (strain ATCC 13950 / DSM 43223 / JCM 6384 / NCTC 13025 / 3600).